We begin with the raw amino-acid sequence, 368 residues long: Phosphate acyltransferase (368 aa).

A disordered region spans residues 334-368; that stretch reads EGSLEQAARDASGAGHASPIAGQPAEPYAAQSSKA.

The protein belongs to the PlsX family. As to quaternary structure, homodimer. Probably interacts with PlsY.

The protein localises to the cytoplasm. It carries out the reaction a fatty acyl-[ACP] + phosphate = an acyl phosphate + holo-[ACP]. It participates in lipid metabolism; phospholipid metabolism. Its function is as follows. Catalyzes the reversible formation of acyl-phosphate (acyl-PO(4)) from acyl-[acyl-carrier-protein] (acyl-ACP). This enzyme utilizes acyl-ACP as fatty acyl donor, but not acyl-CoA. The polypeptide is Phosphate acyltransferase (Paraburkholderia xenovorans (strain LB400)).